Consider the following 658-residue polypeptide: UvrABC system protein B (658 aa).

The Helicase ATP-binding domain maps to 25-178 (KSLKNKNHYQ…KSFLLKLVEM (154 aa)). 38 to 45 (GVTGSGKT) contacts ATP. The Beta-hairpin motif lies at 91-114 (HFDYYQPESYIPRRDLFIEKDSSI). The Helicase C-terminal domain maps to 433 to 607 (QVQDLFDEIK…ELKLRDDETK (175 aa)). The region spanning 623 to 658 (EKIIKELDKKMRECAKNLDFEEAMHLRDEIAKLRTL) is the UVR domain.

This sequence belongs to the UvrB family. Forms a heterotetramer with UvrA during the search for lesions. Interacts with UvrC in an incision complex.

The protein resides in the cytoplasm. In terms of biological role, the UvrABC repair system catalyzes the recognition and processing of DNA lesions. A damage recognition complex composed of 2 UvrA and 2 UvrB subunits scans DNA for abnormalities. Upon binding of the UvrA(2)B(2) complex to a putative damaged site, the DNA wraps around one UvrB monomer. DNA wrap is dependent on ATP binding by UvrB and probably causes local melting of the DNA helix, facilitating insertion of UvrB beta-hairpin between the DNA strands. Then UvrB probes one DNA strand for the presence of a lesion. If a lesion is found the UvrA subunits dissociate and the UvrB-DNA preincision complex is formed. This complex is subsequently bound by UvrC and the second UvrB is released. If no lesion is found, the DNA wraps around the other UvrB subunit that will check the other stand for damage. The protein is UvrABC system protein B of Helicobacter acinonychis (strain Sheeba).